Reading from the N-terminus, the 447-residue chain is Argininosuccinate synthase (447 aa).

ATP contacts are provided by residues 17-25 (AFSGGLDTS) and A43. Y99 provides a ligand contact to L-citrulline. Positions 129 and 131 each coordinate ATP. 3 residues coordinate L-aspartate: T131, N135, and D136. N135 lines the L-citrulline pocket. D136 lines the ATP pocket. R139 and S192 together coordinate L-citrulline. An ATP-binding site is contributed by D194. L-citrulline-binding residues include T201, E203, and E280.

The protein belongs to the argininosuccinate synthase family. Type 2 subfamily. As to quaternary structure, homotetramer.

The protein resides in the cytoplasm. It catalyses the reaction L-citrulline + L-aspartate + ATP = 2-(N(omega)-L-arginino)succinate + AMP + diphosphate + H(+). Its pathway is amino-acid biosynthesis; L-arginine biosynthesis; L-arginine from L-ornithine and carbamoyl phosphate: step 2/3. The protein is Argininosuccinate synthase of Escherichia coli (strain K12 / MC4100 / BW2952).